A 157-amino-acid chain; its full sequence is Endoribonuclease YbeY (157 aa).

His-118, His-122, and His-128 together coordinate Zn(2+).

It belongs to the endoribonuclease YbeY family. Zn(2+) is required as a cofactor.

The protein resides in the cytoplasm. In terms of biological role, single strand-specific metallo-endoribonuclease involved in late-stage 70S ribosome quality control and in maturation of the 3' terminus of the 16S rRNA. This Shewanella loihica (strain ATCC BAA-1088 / PV-4) protein is Endoribonuclease YbeY.